The primary structure comprises 466 residues: 3-isopropylmalate dehydratase large subunit (466 aa).

3 residues coordinate [4Fe-4S] cluster: Cys347, Cys407, and Cys410.

This sequence belongs to the aconitase/IPM isomerase family. LeuC type 1 subfamily. In terms of assembly, heterodimer of LeuC and LeuD. [4Fe-4S] cluster is required as a cofactor.

It carries out the reaction (2R,3S)-3-isopropylmalate = (2S)-2-isopropylmalate. The protein operates within amino-acid biosynthesis; L-leucine biosynthesis; L-leucine from 3-methyl-2-oxobutanoate: step 2/4. Functionally, catalyzes the isomerization between 2-isopropylmalate and 3-isopropylmalate, via the formation of 2-isopropylmaleate. The sequence is that of 3-isopropylmalate dehydratase large subunit from Shewanella piezotolerans (strain WP3 / JCM 13877).